A 586-amino-acid chain; its full sequence is MAPISIADIVAALPAEDTWGPVTSADNMLDGVPYAPFSKGDKLGRMADWTADSKDRDRGGRQAYNRNYRDQQVYGAGSSSLFAVQVAEDESTFSVVDNTRTSAKRTFGRGGGTVFRGRAQRGGAGQRGGRAGFQRVGAGRGQGGDRYYDNRGARGNRGRRFGWKDYDKPQRTREPSVNIRPDWSMLEEVDFNRLSKLNLQAPEGEDVDTYGFLYYYDRSYDKAPVKNAERRLQALDRAAYNVTTSQDPVIQELAEKNQATIFATSDILSMLMCAPRSVYSWDIVIVHQGNKIYFDKREGASLDLVTVNENAADAPLEVAESSGKQESINTPSALALEATFINHNFALQTVVEANNAKVDFNHPNPFYNAEEETEPLASKGYKYRRFDLSLESDEEPLNMIVRTEVDALVKNPVNGEDQQLVVKALNEFDSKAQGSGGSLDWRSKLYSQRGAVVATEMKNNSCKLARWTTQAILAKADGMKLGFVSRANPRSAAAHVVLGVAGYKPREFAAQMNLNLGNGWGIVRTIVDRIRALDADEEEDKVTKYILVKDPNRPVLRLYSVPANAFEEDDEAAEEEQEAKGEVEEA.

The interval 107–154 (FGRGGGTVFRGRAQRGGAGQRGGRAGFQRVGAGRGQGGDRYYDNRGAR) is disordered. The span at 108-131 (GRGGGTVFRGRAQRGGAGQRGGRA) shows a compositional bias: gly residues. Positions 301–315 (SLDLVTVNENAADAP) are RNA gate. The segment covering 566 to 577 (FEEDDEAAEEEQ) has biased composition (acidic residues). Residues 566–586 (FEEDDEAAEEEQEAKGEVEEA) are disordered.

It belongs to the eIF-3 subunit D family. Component of the eukaryotic translation initiation factor 3 (eIF-3) complex.

It localises to the cytoplasm. Its function is as follows. mRNA cap-binding component of the eukaryotic translation initiation factor 3 (eIF-3) complex, which is involved in protein synthesis of a specialized repertoire of mRNAs and, together with other initiation factors, stimulates binding of mRNA and methionyl-tRNAi to the 40S ribosome. The eIF-3 complex specifically targets and initiates translation of a subset of mRNAs involved in cell proliferation. In the eIF-3 complex, eif3d specifically recognizes and binds the 7-methylguanosine cap of a subset of mRNAs. The protein is Eukaryotic translation initiation factor 3 subunit D of Emericella nidulans (strain FGSC A4 / ATCC 38163 / CBS 112.46 / NRRL 194 / M139) (Aspergillus nidulans).